The sequence spans 199 residues: Large ribosomal subunit protein bL9 (199 aa).

Over residues 149 to 166 the composition is skewed to basic and acidic residues; it reads AEAERINRGEDINSRQED. The tract at residues 149–199 is disordered; that stretch reads AEAERINRGEDINSRQEDQDAAAEAIAAAGEFFDPEAQDETPETEAASEQQ. The span at 181–191 shows a compositional bias: acidic residues; it reads FDPEAQDETPE.

Belongs to the bacterial ribosomal protein bL9 family.

Its function is as follows. Binds to the 23S rRNA. In Afipia carboxidovorans (strain ATCC 49405 / DSM 1227 / KCTC 32145 / OM5) (Oligotropha carboxidovorans), this protein is Large ribosomal subunit protein bL9.